The following is a 1220-amino-acid chain: von Willebrand factor A domain-containing protein 5B1 (1220 aa).

Positions 1 to 18 are cleaved as a signal peptide; it reads MPGLLNWITGAALPLTAS. A VIT domain is found at 19–149; that stretch reads DVTSCVSGYA…NVTIFISTSS (131 aa). N-linked (GlcNAc...) asparagine glycosylation occurs at Asn140. Positions 361-529 constitute a VWFA domain; sequence EFIFLIDRSS…RLQPKMVKSL (169 aa). Asn650 carries N-linked (GlcNAc...) asparagine glycosylation. The tract at residues 715 to 807 is disordered; the sequence is NSGQDLNQGP…SPSRPATPAP (93 aa). The segment covering 757 to 774 has biased composition (basic and acidic residues); the sequence is VRERTSDSRSPGDLEPSH. A compositionally biased stretch (low complexity) spans 796 to 807; it reads RASPSRPATPAP. Tyr881 carries the post-translational modification Phosphotyrosine. Disordered stretches follow at residues 937–962 and 976–995; these read RGTSSGFGRPQTMLGEDSAPGNGKFQ and EARSPGREKHGASEGPQRSL. Asn1017 carries an N-linked (GlcNAc...) asparagine glycan. Polar residues predominate over residues 1093–1111; that stretch reads TTRPSESKTPSPQLCTSSP. The interval 1093 to 1115 is disordered; sequence TTRPSESKTPSPQLCTSSPPRHP.

The protein localises to the secreted. The sequence is that of von Willebrand factor A domain-containing protein 5B1 (VWA5B1) from Homo sapiens (Human).